The sequence spans 426 residues: Enolase (426 aa).

Glutamine 163 contacts (2R)-2-phosphoglycerate. Catalysis depends on glutamate 205, which acts as the Proton donor. Positions 242, 283, and 310 each coordinate Mg(2+). (2R)-2-phosphoglycerate is bound by residues lysine 335, arginine 364, serine 365, and lysine 386. Lysine 335 serves as the catalytic Proton acceptor.

Belongs to the enolase family. It depends on Mg(2+) as a cofactor.

The protein resides in the cytoplasm. Its subcellular location is the secreted. The protein localises to the cell surface. The enzyme catalyses (2R)-2-phosphoglycerate = phosphoenolpyruvate + H2O. Its pathway is carbohydrate degradation; glycolysis; pyruvate from D-glyceraldehyde 3-phosphate: step 4/5. Its function is as follows. Catalyzes the reversible conversion of 2-phosphoglycerate (2-PG) into phosphoenolpyruvate (PEP). It is essential for the degradation of carbohydrates via glycolysis. In Pseudarthrobacter chlorophenolicus (strain ATCC 700700 / DSM 12829 / CIP 107037 / JCM 12360 / KCTC 9906 / NCIMB 13794 / A6) (Arthrobacter chlorophenolicus), this protein is Enolase.